We begin with the raw amino-acid sequence, 978 residues long: LRR receptor-like serine/threonine-protein kinase ER1 (978 aa).

The N-terminal stretch at 1–24 (MTPAPAAASYRALVALLLVAVAVA) is a signal peptide. The Extracellular portion of the chain corresponds to 25-577 (DDGSTLLEIK…GHQQKPLISK (553 aa)). N-linked (GlcNAc...) asparagine glycans are attached at residues N62 and N71. LRR repeat units follow at residues 66–87 (AVAALNLSGLNLGGEISPAVGR), 88–112 (LKGIVSIDLKSNGLSGQIPDEIGDC), 114–136 (SLKTLDLSFNSLDGDIPFSVSKL), 137–159 (KHIESLILKNNQLIGVIPSTLSQ), 160–184 (LPNLKILDLAQNKLSGEIPRLIYWN), 186–208 (VLQYLGLRGNNLEGSISPDICQL), 209–232 (TGLWYFDVKNNSLTGPIPETIGNC), 233–257 (TSFQVLDLSYNKLSGSIPFNIGFLQ), 259–278 (ATLSLQGNMFTGPIPSVIGL), 279–302 (MQALAVLDLSYNQLSGPIPSILGN), 304–327 (TYTEKLYMQGNKLTGPIPPELGNM), 328–350 (STLHYLELNDNQLSGFIPPEFGK), 352–375 (TGLFDLNLANNNFEGPIPDNISSC), 377–399 (NLNSFNAYGNRLNGTIPPSLHKL), 400–423 (ESMTYLNLSSNFLSGSIPIELSRI), 424–447 (NNLDTLDLSCNMITGPIPSTIGSL), 449–470 (HLLRLNLSNNGLVGFIPAEIGN), 471–494 (LRSIMEIDMSNNHLGGLIPQELGM), 496–518 (QNLMLLNLKNNNITGDVSSLMNC), and 519–543 (FSLNILNVSYNNLAGVVPTDNNFSR). N-linked (GlcNAc...) asparagine glycans are attached at residues N218 and N231. Residues N302 and N326 are each glycosylated (N-linked (GlcNAc...) asparagine). N371, N389, and N406 each carry an N-linked (GlcNAc...) asparagine glycan. N-linked (GlcNAc...) asparagine glycosylation is present at N454. N-linked (GlcNAc...) asparagine glycosylation is found at N507, N525, and N540. The helical transmembrane segment at 578-598 (AAILGIAVGGLVILLMILVAV) threads the bilayer. Residues 599–978 (CRPHSPPVFK…FGEVISQNTE (380 aa)) lie on the Cytoplasmic side of the membrane. Positions 645 to 916 (LSEKYIIGYG…EVVRVLDCLV (272 aa)) constitute a Protein kinase domain. Residues 651 to 659 (IGYGASSTV) and K673 each bind ATP. Residue D771 is the Proton acceptor of the active site.

The protein belongs to the protein kinase superfamily. Ser/Thr protein kinase family.

Its subcellular location is the cell membrane. It catalyses the reaction L-seryl-[protein] + ATP = O-phospho-L-seryl-[protein] + ADP + H(+). The enzyme catalyses L-threonyl-[protein] + ATP = O-phospho-L-threonyl-[protein] + ADP + H(+). In terms of biological role, receptor kinase involved in the regulation of thermotolerance. Functions as a positive regulator of heat tolerance. May be involved in the regulation of cell proliferation and cell growth. The chain is LRR receptor-like serine/threonine-protein kinase ER1 from Oryza sativa subsp. japonica (Rice).